Reading from the N-terminus, the 207-residue chain is Large ribosomal subunit protein uL4 (207 aa).

A disordered region spans residues 49-78 (HAVKNRSAVRGGGKKPWRQKGTGRARQGSI). Residues 60–71 (GGKKPWRQKGTG) show a composition bias toward basic residues.

This sequence belongs to the universal ribosomal protein uL4 family. As to quaternary structure, part of the 50S ribosomal subunit.

Functionally, one of the primary rRNA binding proteins, this protein initially binds near the 5'-end of the 23S rRNA. It is important during the early stages of 50S assembly. It makes multiple contacts with different domains of the 23S rRNA in the assembled 50S subunit and ribosome. Forms part of the polypeptide exit tunnel. The chain is Large ribosomal subunit protein uL4 from Ligilactobacillus salivarius (strain UCC118) (Lactobacillus salivarius).